The primary structure comprises 290 residues: MAGLHSRLTTFLLLLLSALPAIAAAAPSSGCGKGPTLRNGQTVTTNINGKSRRYTVRLPDNYNQNNPYRLIFLWHPLGSSMQKIIQGEDPNRGGVLPYYGLPPLDTSKSAIYVVPDGLNAGWANQNGEDVSFFDNILQTVSDGLCIDTNLVFSTGFSYGGGMSFSLACSRANKVRAVAVISGAQLSGCAGGNDPVAYYAQHGTSDGVLNVAMGRQLRDRFVRNNGCQPANGEVQPGSGGRSTRVEYQGCQQGKDVVWVVHGGDHNPSQRDPGQNDPFAPRNTWEFFSRFN.

An N-terminal signal peptide occupies residues 1–25 (MAGLHSRLTTFLLLLLSALPAIAAA). The interval 260 to 280 (HGGDHNPSQRDPGQNDPFAPR) is disordered.

Belongs to the serine esterase family.

The protein resides in the secreted. The enzyme catalyses feruloyl-polysaccharide + H2O = ferulate + polysaccharide.. Involved in degradation of plant cell walls. Hydrolyzes the feruloyl-arabinose ester bond in arabinoxylans as well as the feruloyl-galactose and feruloyl-arabinose ester bonds in pectin. Active against methyl esters of ferulate (MFA), sinapate (MSA), caffeate (MCA) and p-coumarate (MpCA). The sequence is that of Feruloyl esterase D from Neurospora crassa (strain ATCC 24698 / 74-OR23-1A / CBS 708.71 / DSM 1257 / FGSC 987).